Reading from the N-terminus, the 371-residue chain is tRNA 2-selenouridine synthase (371 aa).

The Rhodanese domain occupies 12–135; sequence FLDDVPMMDM…MRTFLLDTTQ (124 aa). Cysteine 95 serves as the catalytic S-selanylcysteine intermediate.

It belongs to the SelU family. As to quaternary structure, monomer.

It carries out the reaction 5-methylaminomethyl-2-thiouridine(34) in tRNA + selenophosphate + (2E)-geranyl diphosphate + H2O + H(+) = 5-methylaminomethyl-2-selenouridine(34) in tRNA + (2E)-thiogeraniol + phosphate + diphosphate. The enzyme catalyses 5-methylaminomethyl-2-thiouridine(34) in tRNA + (2E)-geranyl diphosphate = 5-methylaminomethyl-S-(2E)-geranyl-thiouridine(34) in tRNA + diphosphate. The catalysed reaction is 5-methylaminomethyl-S-(2E)-geranyl-thiouridine(34) in tRNA + selenophosphate + H(+) = 5-methylaminomethyl-2-(Se-phospho)selenouridine(34) in tRNA + (2E)-thiogeraniol. It catalyses the reaction 5-methylaminomethyl-2-(Se-phospho)selenouridine(34) in tRNA + H2O = 5-methylaminomethyl-2-selenouridine(34) in tRNA + phosphate. In terms of biological role, involved in the post-transcriptional modification of the uridine at the wobble position (U34) of tRNA(Lys), tRNA(Glu) and tRNA(Gln). Catalyzes the conversion of 2-thiouridine (S2U-RNA) to 2-selenouridine (Se2U-RNA). Acts in a two-step process involving geranylation of 2-thiouridine (S2U) to S-geranyl-2-thiouridine (geS2U) and subsequent selenation of the latter derivative to 2-selenouridine (Se2U) in the tRNA chain. The polypeptide is tRNA 2-selenouridine synthase (Pseudomonas entomophila (strain L48)).